Reading from the N-terminus, the 407-residue chain is Arylacetamide deacetylase-like 3 (407 aa).

An Involved in the stabilization of the negatively charged intermediate by the formation of the oxyanion hole motif is present at residues His-119–Gly-121. Active-site residues include Ser-193, Asp-347, and His-377.

The protein belongs to the 'GDXG' lipolytic enzyme family.

The protein is Arylacetamide deacetylase-like 3 (AADACL3) of Homo sapiens (Human).